The primary structure comprises 425 residues: Serine--tRNA ligase (425 aa).

Thr228–Glu230 is an L-serine binding site. Residue Arg259–Glu261 coordinates ATP. Glu282 contributes to the L-serine binding site. Glu346–Ser349 is a binding site for ATP. Position 382 (Ser382) interacts with L-serine.

It belongs to the class-II aminoacyl-tRNA synthetase family. Type-1 seryl-tRNA synthetase subfamily. Homodimer. The tRNA molecule binds across the dimer.

It is found in the cytoplasm. The enzyme catalyses tRNA(Ser) + L-serine + ATP = L-seryl-tRNA(Ser) + AMP + diphosphate + H(+). It catalyses the reaction tRNA(Sec) + L-serine + ATP = L-seryl-tRNA(Sec) + AMP + diphosphate + H(+). Its pathway is aminoacyl-tRNA biosynthesis; selenocysteinyl-tRNA(Sec) biosynthesis; L-seryl-tRNA(Sec) from L-serine and tRNA(Sec): step 1/1. Its function is as follows. Catalyzes the attachment of serine to tRNA(Ser). Is also able to aminoacylate tRNA(Sec) with serine, to form the misacylated tRNA L-seryl-tRNA(Sec), which will be further converted into selenocysteinyl-tRNA(Sec). This is Serine--tRNA ligase from Rickettsia africae (strain ESF-5).